The sequence spans 406 residues: O-glycosyltransferase PaGT (406 aa).

Residues 1-26 (MSPPSQIKPPQGTTPVPPSELDPRSD) form a disordered region.

It belongs to the afumC glycosyltransferase family.

The protein operates within mycotoxin biosynthesis. Functionally, O-glycosyltransferase; part of the 2 gene clusters that mediate the biosynthesis of fusicoccins, diterpene glucosides that display phytohormone-like activity and function as potent activators of plasma membrane H(+)-ATPases in plants by modifying 14-3-3 proteins and cause the plant disease constriction canker. The first step in the pathway is performed by the fusicoccadiene synthase PaFS that possesses both prenyl transferase and terpene cyclase activity, converting isopentenyl diphosphate and dimethylallyl diphosphate into geranylgeranyl diphosphate (GGDP) and successively converting GGDP into fusicocca-2,10(14)-diene, a precursor for fusicoccin H. The second step is the oxidation at the C-8 position by the cytochrome P450 monooxygenase PaP450-2 to yield fusicocca-2,10(14)-diene-8-beta-ol. The cytochrome P450 monooxygenase PaP450-1 then catalyzes the hydroxylation at the C-16 position to produce fusicocca-2,10(14)-diene-8-beta,16-diol. The dioxygenase fc-dox then catalyzes the 16-oxydation of fusicocca-2,10(14)-diene-8-beta,16-diol to yield an aldehyde (8-beta-hydroxyfusicocca-1,10(14)-dien-16-al). The short-chain dehydrogenase/reductase fc-sdr catalyzes the reduction of the aldehyde to yield fusicocca-1,10(14)-diene-8-beta,16-diol. The next step is the hydroxylation at C-9 performed by the cytochrome P450 monooxygenase PaP450-3 that leads to fusicoccin H aglycon which is glycosylated to fusicoccin H by the O-glycosyltransferase PaGT. Hydroxylation at C-12 by the cytochrome P450 monooxygenase PaP450-4 leads then to the production of fusicoccin Q and is followed by methylation by the O-methyltransferase PaMT to yield fusicoccin P. Fusicoccin P is further converted to fusicoccin J via prenylation by the O-glucose prenyltransferase PaPT. Cytochrome P450 monooxygenase PaP450-5 then performs hydroxylation at C-19 to yield dideacetyl-fusicoccin A which is acetylated to 3'-O-deacetyl-fusicoccin A by the O-acetyltransferase PaAT-2. Finally, a another acetylation by the O-acetyltransferase PaAT-1 yields fusicoccin A. In Phomopsis amygdali (Fusicoccum amygdali), this protein is O-glycosyltransferase PaGT.